Consider the following 263-residue polypeptide: Small ribosomal subunit protein uS2 (263 aa).

The protein belongs to the universal ribosomal protein uS2 family.

The protein is Small ribosomal subunit protein uS2 of Roseiflexus castenholzii (strain DSM 13941 / HLO8).